Consider the following 48-residue polypeptide: Small, acid-soluble spore protein O (48 aa).

Residues 1-23 form a disordered region; it reads MVKRKANHVINGMNDAKSQGKGA.

This sequence belongs to the SspO family.

It is found in the spore core. The sequence is that of Small, acid-soluble spore protein O from Bacillus velezensis (strain DSM 23117 / BGSC 10A6 / LMG 26770 / FZB42) (Bacillus amyloliquefaciens subsp. plantarum).